The sequence spans 128 residues: uncharacterized protein (128 aa).

A coiled-coil region spans residues 95–123; it reads IIDFATAKRELDRLTEEIATLKGELAQDK.

It localises to the cellular thylakoid membrane. This is an uncharacterized protein from Synechocystis sp. (strain ATCC 27184 / PCC 6803 / Kazusa).